The primary structure comprises 337 residues: Biotin synthase (337 aa).

The 229-residue stretch at 39–267 (QEVQVCTLLS…KAMVRLSAGR (229 aa)) folds into the Radical SAM core domain. [4Fe-4S] cluster is bound by residues Cys-54, Cys-58, and Cys-61. [2Fe-2S] cluster is bound by residues Cys-98, Cys-130, Cys-190, and Arg-262.

This sequence belongs to the radical SAM superfamily. Biotin synthase family. In terms of assembly, homodimer. [4Fe-4S] cluster is required as a cofactor. The cofactor is [2Fe-2S] cluster.

The enzyme catalyses (4R,5S)-dethiobiotin + (sulfur carrier)-SH + 2 reduced [2Fe-2S]-[ferredoxin] + 2 S-adenosyl-L-methionine = (sulfur carrier)-H + biotin + 2 5'-deoxyadenosine + 2 L-methionine + 2 oxidized [2Fe-2S]-[ferredoxin]. Its pathway is cofactor biosynthesis; biotin biosynthesis; biotin from 7,8-diaminononanoate: step 2/2. Catalyzes the conversion of dethiobiotin (DTB) to biotin by the insertion of a sulfur atom into dethiobiotin via a radical-based mechanism. The sequence is that of Biotin synthase from Cytophaga hutchinsonii (strain ATCC 33406 / DSM 1761 / CIP 103989 / NBRC 15051 / NCIMB 9469 / D465).